The primary structure comprises 180 residues: Magnetosome protein MamS (180 aa).

Topologically, residues 1 to 21 are cytoplasmic; it reads MDFRPDQVVARIRGAVEGALT. A helical transmembrane segment spans residues 22–42; sequence AQSVLGIGGALVLILVVIALL. Residues 43-180 are Lumenal-facing; the sequence is PDRFTRGEGK…EGLALWMTVQ (138 aa).

The protein belongs to the magnetosome MamS family.

The protein localises to the magnetosome membrane. Functionally, may play a role in magnetite crystal growth and size. In Magnetospirillum gryphiswaldense (strain DSM 6361 / JCM 21280 / NBRC 15271 / MSR-1), this protein is Magnetosome protein MamS.